Reading from the N-terminus, the 331-residue chain is Vitamin B12 import system permease protein BtuC (331 aa).

9 consecutive transmembrane segments (helical) span residues 20–42, 62–84, 91–113, 117–136, 148–170, 190–209, 240–262, 277–296, and 303–325; these read VMLAVLLVLSALYLMVGEVFLSP, LVAAMVIGAALAVSGATLQVLLG, GVLGISGGASLAMVIALFLLPVM, TVFMLAAIIGALVFTLILVG, MLLVGVALGILSGAFVTWAFYFS, SWHHHLVTLVLLPVLVWLCL, LAISILIGCAVALGGIISFVGLV, FLLPLSAFAGATLLVFSDIW, and SAELPLGVMTTTIGAPIFIWMLI.

It belongs to the binding-protein-dependent transport system permease family. FecCD subfamily. The complex is composed of two ATP-binding proteins (BtuD), two transmembrane proteins (BtuC) and a solute-binding protein (BtuF).

The protein localises to the cell inner membrane. Its function is as follows. Part of the ABC transporter complex BtuCDF involved in vitamin B12 import. Involved in the translocation of the substrate across the membrane. This chain is Vitamin B12 import system permease protein BtuC, found in Vibrio vulnificus (strain CMCP6).